The chain runs to 289 residues: Oxaloacetate decarboxylase (289 aa).

Serine 50 lines the substrate pocket. Aspartate 88 provides a ligand contact to Mg(2+). 2 residues coordinate substrate: arginine 159 and histidine 235.

Belongs to the isocitrate lyase/PEP mutase superfamily. Oxaloacetate decarboxylase family. As to quaternary structure, homotetramer; dimer of dimers. Mg(2+) is required as a cofactor.

The enzyme catalyses oxaloacetate + H(+) = pyruvate + CO2. Its function is as follows. Catalyzes the decarboxylation of oxaloacetate into pyruvate. Seems to play a role in maintaining cellular concentrations of bicarbonate and pyruvate. This chain is Oxaloacetate decarboxylase, found in Pseudomonas savastanoi pv. phaseolicola (strain 1448A / Race 6) (Pseudomonas syringae pv. phaseolicola (strain 1448A / Race 6)).